Here is a 404-residue protein sequence, read N- to C-terminus: Rhomboid-related protein 3 (404 aa).

EF-hand domains follow at residues 34–69 (APED…HSSK) and 70–105 (LDPH…KRSN). 7 consecutive transmembrane segments (helical) span residues 164-184 (WFMI…GVLL), 227-247 (LGLN…VHGA), 250-270 (IGLV…VADM), 274-294 (VVGS…NIVM), 305-324 (LLRM…RAVW), 338-358 (PSFV…VVVL), and 371-391 (WWIF…WNIF). The active-site Nucleophile is the S278. The active site involves H343.

Belongs to the peptidase S54 family.

Its subcellular location is the membrane. The catalysed reaction is Cleaves type-1 transmembrane domains using a catalytic dyad composed of serine and histidine that are contributed by different transmembrane domains.. Its function is as follows. May be involved in regulated intramembrane proteolysis and the subsequent release of functional polypeptides from their membrane anchors. The polypeptide is Rhomboid-related protein 3 (Rhbdl3) (Mus musculus (Mouse)).